The chain runs to 141 residues: Hemoglobin subunit alpha (141 aa).

One can recognise a Globin domain in the interval valine 1–arginine 141. Serine 3 bears the Phosphoserine mark. An N6-succinyllysine mark is found at lysine 7 and lysine 11. Lysine 16 is modified (N6-acetyllysine; alternate). Lysine 16 carries the post-translational modification N6-succinyllysine; alternate. Tyrosine 24 carries the post-translational modification Phosphotyrosine. Serine 35 bears the Phosphoserine mark. Lysine 40 is modified (N6-succinyllysine). Serine 49 is modified (phosphoserine). Histidine 58 contributes to the O2 binding site. Residue histidine 87 coordinates heme b. Phosphothreonine is present on threonine 108. A Phosphoserine modification is found at serine 124. Residues threonine 134 and threonine 137 each carry the phosphothreonine modification. Serine 138 carries the phosphoserine modification.

It belongs to the globin family. In terms of assembly, heterotetramer of two alpha chains and two beta chains. As to expression, red blood cells.

In terms of biological role, involved in oxygen transport from the lung to the various peripheral tissues. Hemopressin acts as an antagonist peptide of the cannabinoid receptor CNR1. Hemopressin-binding efficiently blocks cannabinoid receptor CNR1 and subsequent signaling. The chain is Hemoglobin subunit alpha (HBA) from Bradypus tridactylus (Pale-throated three-toed sloth).